The primary structure comprises 146 residues: Large ribosomal subunit protein uL22 (146 aa).

Belongs to the universal ribosomal protein uL22 family. As to quaternary structure, part of the 50S ribosomal subunit.

In terms of biological role, this protein binds specifically to 23S rRNA; its binding is stimulated by other ribosomal proteins, e.g. L4, L17, and L20. It is important during the early stages of 50S assembly. It makes multiple contacts with different domains of the 23S rRNA in the assembled 50S subunit and ribosome. The globular domain of the protein is located near the polypeptide exit tunnel on the outside of the subunit, while an extended beta-hairpin is found that lines the wall of the exit tunnel in the center of the 70S ribosome. The sequence is that of Large ribosomal subunit protein uL22 from Nocardioides sp. (strain ATCC BAA-499 / JS614).